Consider the following 301-residue polypeptide: Phosducin-like protein (301 aa).

T2 is subject to N-acetylthreonine. The tract at residues 15-60 (YYYSTSEDEDSDHEDKDRGRGAPASSSTPAEAELAGEGISVNTGPK) is disordered. Phosphoserine occurs at positions 20 and 25. The span at 36-49 (APASSSTPAEAELA) shows a compositional bias: low complexity. One can recognise a Phosducin domain in the interval 36–299 (APASSSTPAE…TCHSEDSDLE (264 aa)). A thioredoxin fold region spans residues 158–301 (FKQVLEIPSG…HSEDSDLEID (144 aa)). S226, S293, and S296 each carry phosphoserine.

Belongs to the phosducin family. In terms of assembly, interacts with the CCT chaperonin complex. Forms a complex with the beta and gamma subunits of the GTP-binding protein, transducin.

It localises to the cell projection. It is found in the cilium. Its function is as follows. Functions as a co-chaperone for CCT in the assembly of heterotrimeric G protein complexes, facilitates the assembly of both Gbeta-Ggamma and RGS-Gbeta5 heterodimers. Also acts as a positive regulator of hedgehog signaling and regulates ciliary function. In Rattus norvegicus (Rat), this protein is Phosducin-like protein (Pdcl).